We begin with the raw amino-acid sequence, 375 residues long: Chaperone protein DnaJ (375 aa).

The region spanning 5-70 is the J domain; it reads DYYEVLGVER…GKRSAYDQYG (66 aa). A CR-type zinc finger spans residues 134–212; it reads GTTVTIRVPT…CHGQGRVEES (79 aa). Residues cysteine 147, cysteine 150, cysteine 164, cysteine 167, cysteine 186, cysteine 189, cysteine 200, and cysteine 203 each contribute to the Zn(2+) site. CXXCXGXG motif repeat units lie at residues 147-154, 164-171, 186-193, and 200-207; these read CKTCDGTG, CTTCGGIG, CPRCHGSG, and CGSCHGQG.

It belongs to the DnaJ family. As to quaternary structure, homodimer. It depends on Zn(2+) as a cofactor.

Its subcellular location is the cytoplasm. Participates actively in the response to hyperosmotic and heat shock by preventing the aggregation of stress-denatured proteins and by disaggregating proteins, also in an autonomous, DnaK-independent fashion. Unfolded proteins bind initially to DnaJ; upon interaction with the DnaJ-bound protein, DnaK hydrolyzes its bound ATP, resulting in the formation of a stable complex. GrpE releases ADP from DnaK; ATP binding to DnaK triggers the release of the substrate protein, thus completing the reaction cycle. Several rounds of ATP-dependent interactions between DnaJ, DnaK and GrpE are required for fully efficient folding. Also involved, together with DnaK and GrpE, in the DNA replication of plasmids through activation of initiation proteins. This Ectopseudomonas mendocina (strain ymp) (Pseudomonas mendocina) protein is Chaperone protein DnaJ.